The primary structure comprises 571 residues: Urease subunit alpha (571 aa).

Residues 132-571 enclose the Urease domain; it reads GGIDSHIHFI…LPMAQRYFLF (440 aa). Residues H137, H139, and K220 each contribute to the Ni(2+) site. K220 bears the N6-carboxylysine mark. H222 contributes to the substrate binding site. Residues H249 and H275 each contribute to the Ni(2+) site. The active-site Proton donor is H323. Position 363 (D363) interacts with Ni(2+).

It belongs to the metallo-dependent hydrolases superfamily. Urease alpha subunit family. In terms of assembly, heterotrimer of UreA (gamma), UreB (beta) and UreC (alpha) subunits. Three heterotrimers associate to form the active enzyme. The cofactor is Ni cation. In terms of processing, carboxylation allows a single lysine to coordinate two nickel ions.

The protein resides in the cytoplasm. The catalysed reaction is urea + 2 H2O + H(+) = hydrogencarbonate + 2 NH4(+). The protein operates within nitrogen metabolism; urea degradation; CO(2) and NH(3) from urea (urease route): step 1/1. This Kocuria rhizophila (strain ATCC 9341 / DSM 348 / NBRC 103217 / DC2201) protein is Urease subunit alpha.